Consider the following 270-residue polypeptide: Ribosomal RNA small subunit methyltransferase A (270 aa).

Positions 16, 18, 43, 64, 89, and 110 each coordinate S-adenosyl-L-methionine.

This sequence belongs to the class I-like SAM-binding methyltransferase superfamily. rRNA adenine N(6)-methyltransferase family. RsmA subfamily.

The protein resides in the cytoplasm. It catalyses the reaction adenosine(1518)/adenosine(1519) in 16S rRNA + 4 S-adenosyl-L-methionine = N(6)-dimethyladenosine(1518)/N(6)-dimethyladenosine(1519) in 16S rRNA + 4 S-adenosyl-L-homocysteine + 4 H(+). Specifically dimethylates two adjacent adenosines (A1518 and A1519) in the loop of a conserved hairpin near the 3'-end of 16S rRNA in the 30S particle. May play a critical role in biogenesis of 30S subunits. This Pseudomonas fluorescens (strain ATCC BAA-477 / NRRL B-23932 / Pf-5) protein is Ribosomal RNA small subunit methyltransferase A.